Here is a 334-residue protein sequence, read N- to C-terminus: E3 ubiquitin-protein ligase ATL4 (334 aa).

Residues 1–20 (MESLINPSHGGGNYDSHSSS) form a disordered region. The chain crosses the membrane as a helical span at residues 28 to 48 (VLVIILILLMTLLISVSICFL). The segment at 117–159 (CAVCLSKFEPEDQLRLLPLCCHAFHADCIDIWLVSNQTCPLCR) adopts an RING-type; atypical zinc-finger fold.

The protein belongs to the RING-type zinc finger family. ATL subfamily.

Its subcellular location is the membrane. The enzyme catalyses S-ubiquitinyl-[E2 ubiquitin-conjugating enzyme]-L-cysteine + [acceptor protein]-L-lysine = [E2 ubiquitin-conjugating enzyme]-L-cysteine + N(6)-ubiquitinyl-[acceptor protein]-L-lysine.. It participates in protein modification; protein ubiquitination. In terms of biological role, E3 ubiquitin-protein ligase able to catalyze polyubiquitination with ubiquitin-conjugating enzyme E2 UBC8 in vitro. This Arabidopsis thaliana (Mouse-ear cress) protein is E3 ubiquitin-protein ligase ATL4.